Reading from the N-terminus, the 105-residue chain is Small ribosomal subunit protein bS18 (105 aa).

The span at 1–10 (MAEETNQQAP) shows a compositional bias: polar residues. The tract at residues 1–34 (MAEETNQQAPESGASSSQPTSRPSGPRGGSGGRK) is disordered. Residues 12–25 (SGASSSQPTSRPSG) show a composition bias toward low complexity.

It belongs to the bacterial ribosomal protein bS18 family. In terms of assembly, part of the 30S ribosomal subunit. Forms a tight heterodimer with protein bS6.

Binds as a heterodimer with protein bS6 to the central domain of the 16S rRNA, where it helps stabilize the platform of the 30S subunit. This Acidobacterium capsulatum (strain ATCC 51196 / DSM 11244 / BCRC 80197 / JCM 7670 / NBRC 15755 / NCIMB 13165 / 161) protein is Small ribosomal subunit protein bS18.